Reading from the N-terminus, the 156-residue chain is Aspartate 1-decarboxylase (156 aa).

Residue serine 26 is the Schiff-base intermediate with substrate; via pyruvic acid of the active site. Serine 26 carries the post-translational modification Pyruvic acid (Ser). A substrate-binding site is contributed by threonine 58. Tyrosine 59 acts as the Proton donor in catalysis. A substrate-binding site is contributed by 74–76; the sequence is GGA.

This sequence belongs to the PanD family. As to quaternary structure, heterooctamer of four alpha and four beta subunits. Requires pyruvate as cofactor. Post-translationally, is synthesized initially as an inactive proenzyme, which is activated by self-cleavage at a specific serine bond to produce a beta-subunit with a hydroxyl group at its C-terminus and an alpha-subunit with a pyruvoyl group at its N-terminus.

Its subcellular location is the cytoplasm. It catalyses the reaction L-aspartate + H(+) = beta-alanine + CO2. It participates in cofactor biosynthesis; (R)-pantothenate biosynthesis; beta-alanine from L-aspartate: step 1/1. In terms of biological role, catalyzes the pyruvoyl-dependent decarboxylation of aspartate to produce beta-alanine. In Gloeothece citriformis (strain PCC 7424) (Cyanothece sp. (strain PCC 7424)), this protein is Aspartate 1-decarboxylase.